Here is a 225-residue protein sequence, read N- to C-terminus: ATP-dependent Clp protease proteolytic subunit (225 aa).

Ser123 acts as the Nucleophile in catalysis. His148 is a catalytic residue.

It belongs to the peptidase S14 family. As to quaternary structure, fourteen ClpP subunits assemble into 2 heptameric rings which stack back to back to give a disk-like structure with a central cavity, resembling the structure of eukaryotic proteasomes.

The protein resides in the cytoplasm. It carries out the reaction Hydrolysis of proteins to small peptides in the presence of ATP and magnesium. alpha-casein is the usual test substrate. In the absence of ATP, only oligopeptides shorter than five residues are hydrolyzed (such as succinyl-Leu-Tyr-|-NHMec, and Leu-Tyr-Leu-|-Tyr-Trp, in which cleavage of the -Tyr-|-Leu- and -Tyr-|-Trp bonds also occurs).. In terms of biological role, cleaves peptides in various proteins in a process that requires ATP hydrolysis. Has a chymotrypsin-like activity. Plays a major role in the degradation of misfolded proteins. This Chlorobium chlorochromatii (strain CaD3) protein is ATP-dependent Clp protease proteolytic subunit.